Reading from the N-terminus, the 292-residue chain is Ribosomal RNA small subunit methyltransferase A (292 aa).

Asn-28, Leu-30, Gly-55, Glu-76, Asp-101, and Asn-126 together coordinate S-adenosyl-L-methionine.

This sequence belongs to the class I-like SAM-binding methyltransferase superfamily. rRNA adenine N(6)-methyltransferase family. RsmA subfamily.

Its subcellular location is the cytoplasm. The enzyme catalyses adenosine(1518)/adenosine(1519) in 16S rRNA + 4 S-adenosyl-L-methionine = N(6)-dimethyladenosine(1518)/N(6)-dimethyladenosine(1519) in 16S rRNA + 4 S-adenosyl-L-homocysteine + 4 H(+). Its function is as follows. Specifically dimethylates two adjacent adenosines (A1518 and A1519) in the loop of a conserved hairpin near the 3'-end of 16S rRNA in the 30S particle. May play a critical role in biogenesis of 30S subunits. In Bacillus mycoides (strain KBAB4) (Bacillus weihenstephanensis), this protein is Ribosomal RNA small subunit methyltransferase A.